Consider the following 306-residue polypeptide: Agmatinase (306 aa).

Residues His126, Asp149, His151, Asp153, Asp230, and Asp232 each coordinate Mn(2+).

The protein belongs to the arginase family. Agmatinase subfamily. It depends on Mn(2+) as a cofactor.

The enzyme catalyses agmatine + H2O = urea + putrescine. It participates in amine and polyamine biosynthesis; putrescine biosynthesis via agmatine pathway; putrescine from agmatine: step 1/1. Functionally, catalyzes the formation of putrescine from agmatine. The polypeptide is Agmatinase (Citrobacter koseri (strain ATCC BAA-895 / CDC 4225-83 / SGSC4696)).